The primary structure comprises 390 residues: Flap endonuclease 1 (390 aa).

Residues 1–111 (MGIKGLAKLL…GELLKRREKR (111 aa)) form an N-domain region. A Mg(2+)-binding site is contributed by Asp-34. DNA contacts are provided by Arg-47 and Arg-77. Positions 93, 165, 167, 186, and 188 each coordinate Mg(2+). Residues 129–260 (EQDKQSKRLV…KTALKLIREH (132 aa)) form an I-domain region. Glu-165 is a DNA binding site. DNA is bound by residues Gly-238 and Asp-240. Asp-240 is a binding site for Mg(2+). Residues 342–390 (KPQSRMDSFFKVKANPEGDKKKAEKRKAELAASRGKGKKGKGGGGFKKK) are disordered. Residues 343–351 (PQSRMDSFF) form an interaction with PCNA region. Residues 349-370 (SFFKVKANPEGDKKKAEKRKAE) are compositionally biased toward basic and acidic residues. Positions 376 to 390 (GKGKKGKGGGGFKKK) are enriched in basic residues.

This sequence belongs to the XPG/RAD2 endonuclease family. FEN1 subfamily. As to quaternary structure, interacts with PCNA. Three molecules of FEN1 bind to one PCNA trimer with each molecule binding to one PCNA monomer. PCNA stimulates the nuclease activity without altering cleavage specificity. The cofactor is Mg(2+). Post-translationally, phosphorylated. Phosphorylation upon DNA damage induces relocalization to the nuclear plasma.

It localises to the nucleus. The protein resides in the nucleolus. Its subcellular location is the nucleoplasm. It is found in the mitochondrion. Its function is as follows. Structure-specific nuclease with 5'-flap endonuclease and 5'-3' exonuclease activities involved in DNA replication and repair. During DNA replication, cleaves the 5'-overhanging flap structure that is generated by displacement synthesis when DNA polymerase encounters the 5'-end of a downstream Okazaki fragment. It enters the flap from the 5'-end and then tracks to cleave the flap base, leaving a nick for ligation. Also involved in the long patch base excision repair (LP-BER) pathway, by cleaving within the apurinic/apyrimidinic (AP) site-terminated flap. Acts as a genome stabilization factor that prevents flaps from equilibrating into structures that lead to duplications and deletions. Also possesses 5'-3' exonuclease activity on nicked or gapped double-stranded DNA, and exhibits RNase H activity. Also involved in replication and repair of rDNA and in repairing mitochondrial DNA. This Thalassiosira pseudonana (Marine diatom) protein is Flap endonuclease 1.